The primary structure comprises 220 residues: Adenylate kinase (220 aa).

10 to 15 (GAGKGT) contacts ATP. The tract at residues 30–59 (STGDMLRAAVKAGTPLGVEAKGYMDAGKLV) is NMP. Residues threonine 31, arginine 36, 57-59 (KLV), 85-88 (GFPR), and glutamine 92 contribute to the AMP site. Residues 122 to 159 (GRRTHPASGRTYHVKFNPPKVEGHDDVTGEPLIQRDDD) are LID. ATP is bound by residues arginine 123 and 132-133 (TY). Arginine 156 and arginine 167 together coordinate AMP. ATP is bound at residue glycine 206.

This sequence belongs to the adenylate kinase family. Monomer.

It localises to the cytoplasm. It carries out the reaction AMP + ATP = 2 ADP. Its pathway is purine metabolism; AMP biosynthesis via salvage pathway; AMP from ADP: step 1/1. Functionally, catalyzes the reversible transfer of the terminal phosphate group between ATP and AMP. Plays an important role in cellular energy homeostasis and in adenine nucleotide metabolism. This Burkholderia cenocepacia (strain HI2424) protein is Adenylate kinase.